The primary structure comprises 1259 residues: Autism susceptibility gene 2 protein (1259 aa).

Disordered regions lie at residues 1–87, 108–285, 299–470, 771–1027, and 1119–1146; these read MDGP…EEDI, LKPQ…QDCC, CPQV…PPPP, PNSM…MTVG, and REPH…HERG. Residues 8 to 17 are compositionally biased toward basic residues; sequence HGLRKKRRSR. The segment covering 28–41 has biased composition (gly residues); the sequence is GGLGAGAAGGGGAG. A compositionally biased stretch (basic and acidic residues) spans 108 to 118; it reads LKPQERVEKRQ. Residues 136 to 147 are compositionally biased toward basic residues; sequence HSKKSRLSHPHH. The segment covering 148–158 has biased composition (basic and acidic residues); that stretch reads YSSDRENDRNL. Over residues 177 to 192 the composition is skewed to polar residues; sequence PGQNSCRDSDSESASG. Residues 276-285 show a composition bias toward basic and acidic residues; the sequence is RSQEKSQDCC. The interval 289–472 is important for regulation of lamellipodia formation; it reads IFEPVVLKDP…PTALPPPPPL (184 aa). Composition is skewed to pro residues over residues 331-345 and 353-365; these read PPQP…PQGP and APQP…PRPQ. The segment covering 386–410 has biased composition (low complexity); sequence SLSQPLSAYNSSSLSLNSLSSSRSS. The segment covering 436–447 has biased composition (polar residues); the sequence is PNHSPLHSFTPT. The segment covering 801–810 has biased composition (pro residues); the sequence is PSFPTPPPWL. 3 stretches are compositionally biased toward basic and acidic residues: residues 813–850, 876–935, and 960–993; these read GELE…VEKR, IRAH…EAKQ, and REAE…HDLP. A compositionally biased stretch (basic residues) spans 1125–1134; that stretch reads SHHHHHHHHP. A phosphoserine mark is found at S1198 and S1233. A disordered region spans residues 1217-1259; the sequence is LSAPPPLISTLGGRPVSPRRTTPLSAEIRERPPSHTLKDIEAR. Residues 1243–1259 are compositionally biased toward basic and acidic residues; the sequence is EIRERPPSHTLKDIEAR.

Belongs to the AUTS2 family. In terms of assembly, component of a PRC1-like complex that contains PCGF5, RNF2, CSNK2B, RYBP and AUTS2. Within this complex, interacts directly with PCGF5 and CSNK2B. Interacts with the histone acetyltransferase EP300/p300. Interacts (via Pro-rich region) with PREX1, DOCK1 and ELMO2. As to expression, strongly expressed in brain, skeletal muscle and kidney. Also expressed in placenta, lung and leukocytes.

The protein resides in the nucleus. It localises to the cytoplasm. Its subcellular location is the cytoskeleton. The protein localises to the cell projection. It is found in the growth cone. In terms of biological role, component of a Polycomb group (PcG) multiprotein PRC1-like complex, a complex class required to maintain the transcriptionally repressive state of many genes, including Hox genes, throughout development. PcG PRC1 complex acts via chromatin remodeling and modification of histones; it mediates monoubiquitination of histone H2A 'Lys-119', rendering chromatin heritably changed in its expressibility. The PRC1-like complex that contains PCGF5, RNF2, CSNK2B, RYBP and AUTS2 has decreased histone H2A ubiquitination activity, due to the phosphorylation of RNF2 by CSNK2B. As a consequence, the complex mediates transcriptional activation. In the cytoplasm, plays a role in axon and dendrite elongation and in neuronal migration during embryonic brain development. Promotes reorganization of the actin cytoskeleton, lamellipodia formation and neurite elongation via its interaction with RAC guanine nucleotide exchange factors, which then leads to the activation of RAC1. This Homo sapiens (Human) protein is Autism susceptibility gene 2 protein (AUTS2).